The following is a 188-amino-acid chain: Elongation factor P (188 aa).

The residue at position 34 (Lys-34) is an N6-(3,6-diaminohexanoyl)-5-hydroxylysine.

The protein belongs to the elongation factor P family. In terms of processing, may be beta-lysylated on the epsilon-amino group of Lys-34 by the combined action of EpmA and EpmB, and then hydroxylated on the C5 position of the same residue by EpmC (if this protein is present). Lysylation is critical for the stimulatory effect of EF-P on peptide-bond formation. The lysylation moiety may extend toward the peptidyltransferase center and stabilize the terminal 3-CCA end of the tRNA. Hydroxylation of the C5 position on Lys-34 may allow additional potential stabilizing hydrogen-bond interactions with the P-tRNA.

The protein resides in the cytoplasm. The protein operates within protein biosynthesis; polypeptide chain elongation. In terms of biological role, involved in peptide bond synthesis. Alleviates ribosome stalling that occurs when 3 or more consecutive Pro residues or the sequence PPG is present in a protein, possibly by augmenting the peptidyl transferase activity of the ribosome. Modification of Lys-34 is required for alleviation. The sequence is that of Elongation factor P from Vibrio parahaemolyticus serotype O3:K6 (strain RIMD 2210633).